The chain runs to 544 residues: MFS-type transporter prx5 (544 aa).

The interval 1-28 (MAVDTEKDSVQAGSPMETPGSPVDETTE) is disordered. 13 helical membrane passes run 36–56 (WIVSMILSCGYGLSFWPIPVV), 90–110 (LDHLCFLDLVCFIGHIVVASA), 116–136 (VIAGLVVSGFGGANCQMAAFA), 148–168 (IGVVIADLTVYIAVIIAPVTA), 178–198 (AWNFWGVAIFQGLSFFGLLFL), 221–241 (GAFLFIGGAVPFLMGIVWAGV), 249–269 (VVAPLVVGAAVLVCFALWESF), 290–310 (FTAPVIALGVVNMFYYSSSIL), 330–350 (VILSLPQGFAIFFGAMLLTCF), 361–381 (LTGSVFVMVVFGSLLGIVTPT), 387–407 (IAFIFLSQAGFGWALYLSIAI), 418–438 (GVSGGISGCIRFAAGAVATSI), and 505–525 (AIFVVAMVSMAFGILGLAACL).

It belongs to the major facilitator superfamily.

The protein localises to the cell membrane. Its function is as follows. MFS-type transporter; part of the gene cluster that mediates the biosynthesis of PR-toxin, a bicyclic sesquiterpene belonging to the eremophilane class and acting as a mycotoxin. This Penicillium rubens (strain ATCC 28089 / DSM 1075 / NRRL 1951 / Wisconsin 54-1255) (Penicillium chrysogenum) protein is MFS-type transporter prx5.